The primary structure comprises 177 residues: Ribosome maturation factor RimP (177 aa).

Over residues 153–171 (VEFNRKDTKNDNQTEHDNK) the composition is skewed to basic and acidic residues. The disordered stretch occupies residues 153–177 (VEFNRKDTKNDNQTEHDNKTEEEEA).

This sequence belongs to the RimP family.

It localises to the cytoplasm. Functionally, required for maturation of 30S ribosomal subunits. The protein is Ribosome maturation factor RimP of Streptomyces coelicolor (strain ATCC BAA-471 / A3(2) / M145).